A 582-amino-acid chain; its full sequence is Poly(A) RNA polymerase, mitochondrial (582 aa).

A mitochondrion-targeting transit peptide spans 1–37 (MAVPGVGLLTRLNLCARRRTRVQRPIVRLLSCPGTVA). Lysine 90 is modified (N6-acetyllysine). ATP-binding positions include 107-109 (YES) and 241-242 (GC). Mg(2+) is bound by residues aspartate 243 and aspartate 245. The PAP-associated domain occupies 437-483 (LELLLKEFFEYFGNFAFDKNSINIRQGREQNKPDSSPLYIQNPFETS).

This sequence belongs to the DNA polymerase type-B-like family. As to quaternary structure, homodimer. Mg(2+) is required as a cofactor. It depends on Mn(2+) as a cofactor. Ubiquitous, with stronger expression in tissues with high energy requirements: heart, brain, and skeletal muscle.

The protein resides in the cytoplasm. Its subcellular location is the mitochondrion. It catalyses the reaction RNA(n) + ATP = RNA(n)-3'-adenine ribonucleotide + diphosphate. Its function is as follows. Polymerase that creates the 3' poly(A) tail of mitochondrial transcripts. Can use all four nucleotides, but has higher activity with ATP and UTP (in vitro). Plays a role in replication-dependent histone mRNA degradation. May be involved in the terminal uridylation of mature histone mRNAs before their degradation is initiated. Might be responsible for the creation of some UAA stop codons which are not encoded in mtDNA. In Homo sapiens (Human), this protein is Poly(A) RNA polymerase, mitochondrial (MTPAP).